We begin with the raw amino-acid sequence, 69 residues long: UPF0337 protein DIP1660 (69 aa).

Basic and acidic residues-rich tracts occupy residues 1 to 19 and 30 to 41; these read MSDF…KEAV and DEGRADQTKADV. The interval 1–42 is disordered; it reads MSDFENKIEELGGKAKEAVGEATENEQLADEGRADQTKADVK.

The protein belongs to the UPF0337 (CsbD) family.

In Corynebacterium diphtheriae (strain ATCC 700971 / NCTC 13129 / Biotype gravis), this protein is UPF0337 protein DIP1660.